The sequence spans 204 residues: Outer-membrane lipoprotein carrier protein (204 aa).

The first 21 residues, 1–21 (MKKLLVACCVVSGMMSASVLA), serve as a signal peptide directing secretion.

Belongs to the LolA family. Monomer.

Its subcellular location is the periplasm. Functionally, participates in the translocation of lipoproteins from the inner membrane to the outer membrane. Only forms a complex with a lipoprotein if the residue after the N-terminal Cys is not an aspartate (The Asp acts as a targeting signal to indicate that the lipoprotein should stay in the inner membrane). This chain is Outer-membrane lipoprotein carrier protein, found in Edwardsiella ictaluri (strain 93-146).